We begin with the raw amino-acid sequence, 345 residues long: MTDKTSLSYKDAGVDIDAGNALVDRIKGVVKKTRRPEVMGGLGGFGALCALPQKYREPVLVSGTDGVGTKLRLAMDLKRHDTIGIDLVAMCVNDLVVQGAEPLFFLDYYATGKLDVDTAASVINGIAEGCLQSGCALVGGETAEMPGMYHGDDYDVAGFCVGVVEKSEIIDGSKVADGDVLVALASSGPHSNGYSLVRKILEVSGADPQTTELDGKPLADHLLAPTRIYVKPVLELIEKLEVHAIAHLTGGGFWENIPRVLPDNTQAVIDEASWQWPAVFNWLQQAGNVSRHEMYRTFNCGVGMVIALPAAEADNAVALLNSLGETAWKIGAIKASDAQERVVIA.

Belongs to the AIR synthase family.

Its subcellular location is the cytoplasm. It catalyses the reaction 2-formamido-N(1)-(5-O-phospho-beta-D-ribosyl)acetamidine + ATP = 5-amino-1-(5-phospho-beta-D-ribosyl)imidazole + ADP + phosphate + H(+). It participates in purine metabolism; IMP biosynthesis via de novo pathway; 5-amino-1-(5-phospho-D-ribosyl)imidazole from N(2)-formyl-N(1)-(5-phospho-D-ribosyl)glycinamide: step 2/2. The protein is Phosphoribosylformylglycinamidine cyclo-ligase of Cronobacter sakazakii (strain ATCC BAA-894) (Enterobacter sakazakii).